Reading from the N-terminus, the 140-residue chain is ATP synthase epsilon chain (140 aa).

Belongs to the ATPase epsilon chain family. F-type ATPases have 2 components, CF(1) - the catalytic core - and CF(0) - the membrane proton channel. CF(1) has five subunits: alpha(3), beta(3), gamma(1), delta(1), epsilon(1). CF(0) has three main subunits: a, b and c.

The protein resides in the cell inner membrane. Its function is as follows. Produces ATP from ADP in the presence of a proton gradient across the membrane. The polypeptide is ATP synthase epsilon chain (Stenotrophomonas maltophilia (strain R551-3)).